The primary structure comprises 77 residues: Putative membrane protein insertion efficiency factor (77 aa).

Belongs to the UPF0161 family.

The protein localises to the cell membrane. Functionally, could be involved in insertion of integral membrane proteins into the membrane. The sequence is that of Putative membrane protein insertion efficiency factor from Geobacillus sp. (strain WCH70).